The following is a 154-amino-acid chain: Probable chemoreceptor glutamine deamidase CheD (154 aa).

The protein belongs to the CheD family.

It catalyses the reaction L-glutaminyl-[protein] + H2O = L-glutamyl-[protein] + NH4(+). In terms of biological role, probably deamidates glutamine residues to glutamate on methyl-accepting chemotaxis receptors (MCPs), playing an important role in chemotaxis. This Methanococcus vannielii (strain ATCC 35089 / DSM 1224 / JCM 13029 / OCM 148 / SB) protein is Probable chemoreceptor glutamine deamidase CheD.